Here is a 176-residue protein sequence, read N- to C-terminus: NAD(P)H-quinone oxidoreductase subunit 6, chloroplastic (176 aa).

Helical transmembrane passes span 10 to 30 (FLLV…VLLP), 32 to 52 (PIYS…FYIL), 61 to 81 (AQLL…VMFI), 92 to 112 (LWTV…VSLI), and 152 to 172 (FFLP…GAIA).

Belongs to the complex I subunit 6 family. In terms of assembly, NDH is composed of at least 16 different subunits, 5 of which are encoded in the nucleus.

The protein localises to the plastid. It localises to the chloroplast thylakoid membrane. It catalyses the reaction a plastoquinone + NADH + (n+1) H(+)(in) = a plastoquinol + NAD(+) + n H(+)(out). The enzyme catalyses a plastoquinone + NADPH + (n+1) H(+)(in) = a plastoquinol + NADP(+) + n H(+)(out). Its function is as follows. NDH shuttles electrons from NAD(P)H:plastoquinone, via FMN and iron-sulfur (Fe-S) centers, to quinones in the photosynthetic chain and possibly in a chloroplast respiratory chain. The immediate electron acceptor for the enzyme in this species is believed to be plastoquinone. Couples the redox reaction to proton translocation, and thus conserves the redox energy in a proton gradient. This chain is NAD(P)H-quinone oxidoreductase subunit 6, chloroplastic (ndhG), found in Lactuca sativa (Garden lettuce).